We begin with the raw amino-acid sequence, 548 residues long: Chaperonin GroEL (548 aa).

ATP contacts are provided by residues 30 to 33 (TLGP), Lys51, 87 to 91 (DGTTT), Gly415, 479 to 481 (NAA), and Asp495.

The protein belongs to the chaperonin (HSP60) family. Forms a cylinder of 14 subunits composed of two heptameric rings stacked back-to-back. Interacts with the co-chaperonin GroES.

It localises to the cytoplasm. The catalysed reaction is ATP + H2O + a folded polypeptide = ADP + phosphate + an unfolded polypeptide.. Together with its co-chaperonin GroES, plays an essential role in assisting protein folding. The GroEL-GroES system forms a nano-cage that allows encapsulation of the non-native substrate proteins and provides a physical environment optimized to promote and accelerate protein folding. This chain is Chaperonin GroEL, found in Aliivibrio fischeri (strain MJ11) (Vibrio fischeri).